A 596-amino-acid polypeptide reads, in one-letter code: Elongation factor 4 (596 aa).

The tr-type G domain occupies K2–E184. Residues D14–T19 and N131–D134 each bind GTP.

Belongs to the TRAFAC class translation factor GTPase superfamily. Classic translation factor GTPase family. LepA subfamily.

It is found in the cell inner membrane. The catalysed reaction is GTP + H2O = GDP + phosphate + H(+). Required for accurate and efficient protein synthesis under certain stress conditions. May act as a fidelity factor of the translation reaction, by catalyzing a one-codon backward translocation of tRNAs on improperly translocated ribosomes. Back-translocation proceeds from a post-translocation (POST) complex to a pre-translocation (PRE) complex, thus giving elongation factor G a second chance to translocate the tRNAs correctly. Binds to ribosomes in a GTP-dependent manner. The protein is Elongation factor 4 of Shewanella sp. (strain W3-18-1).